The sequence spans 84 residues: Phosphoribosylformylglycinamidine synthase subunit PurS (84 aa).

The protein belongs to the PurS family. As to quaternary structure, homodimer or homotetramer. Part of the FGAM synthase complex composed of 1 PurL, 1 PurQ and 2 PurS subunits.

Its subcellular location is the cytoplasm. It carries out the reaction N(2)-formyl-N(1)-(5-phospho-beta-D-ribosyl)glycinamide + L-glutamine + ATP + H2O = 2-formamido-N(1)-(5-O-phospho-beta-D-ribosyl)acetamidine + L-glutamate + ADP + phosphate + H(+). Its pathway is purine metabolism; IMP biosynthesis via de novo pathway; 5-amino-1-(5-phospho-D-ribosyl)imidazole from N(2)-formyl-N(1)-(5-phospho-D-ribosyl)glycinamide: step 1/2. Functionally, part of the phosphoribosylformylglycinamidine synthase complex involved in the purines biosynthetic pathway. Catalyzes the ATP-dependent conversion of formylglycinamide ribonucleotide (FGAR) and glutamine to yield formylglycinamidine ribonucleotide (FGAM) and glutamate. The FGAM synthase complex is composed of three subunits. PurQ produces an ammonia molecule by converting glutamine to glutamate. PurL transfers the ammonia molecule to FGAR to form FGAM in an ATP-dependent manner. PurS interacts with PurQ and PurL and is thought to assist in the transfer of the ammonia molecule from PurQ to PurL. The chain is Phosphoribosylformylglycinamidine synthase subunit PurS from Bacillus subtilis (strain 168).